A 163-amino-acid chain; its full sequence is SKP1-like protein 4 (163 aa).

Positions 105–163 are interaction with the F-box domain of F-box proteins; the sequence is ILAANYLNIGGLLDLTCKAVADQMRGKTPEQMRAHFNIKNDYTPEEEAEVRNENKWAFE.

The protein belongs to the SKP1 family. As to quaternary structure, part of a SCF (SKP1-cullin-F-box) protein ligase complex. Interacts with At1g56610, At1g67340, At3g62230, At3g59000, At4g27050, At1g55000, SKIP16 and SKIP32. In terms of tissue distribution, mostly expressed in inflorescence and siliques, and, to a lower extent, in seedlings, roots, and stems.

The protein localises to the nucleus. It participates in protein modification; protein ubiquitination. Involved in ubiquitination and subsequent proteasomal degradation of target proteins. Together with CUL1, RBX1 and a F-box protein, it forms a SCF E3 ubiquitin ligase complex. The functional specificity of this complex depends on the type of F-box protein. In the SCF complex, it serves as an adapter that links the F-box protein to CUL1. This chain is SKP1-like protein 4 (ASK4), found in Arabidopsis thaliana (Mouse-ear cress).